A 783-amino-acid chain; its full sequence is Aconitate hydratase, mitochondrial (783 aa).

A mitochondrion-targeting transit peptide spans 1–25; sequence MITTRLARMGALAPKSRLLFGTRGM. Substrate is bound by residues Q102 and 195 to 197; that span reads DSH. [4Fe-4S] cluster-binding residues include C388, C451, and C454. Residues R477 and R482 each coordinate substrate. The tract at residues 524–555 is disordered; sequence EFKLKAPTGDGLPSRGYDPGRDTYQAPPTDRS. Substrate contacts are provided by residues R610 and 673-674; that span reads SR.

It belongs to the aconitase/IPM isomerase family. Requires [4Fe-4S] cluster as cofactor.

It localises to the mitochondrion. The catalysed reaction is citrate = D-threo-isocitrate. The enzyme catalyses (2R)-homocitrate = cis-homoaconitate + H2O. Its pathway is carbohydrate metabolism; tricarboxylic acid cycle; isocitrate from oxaloacetate: step 2/2. It functions in the pathway amino-acid biosynthesis; L-lysine biosynthesis via AAA pathway; L-alpha-aminoadipate from 2-oxoglutarate: step 2/5. In terms of biological role, catalyzes the isomerization of citrate to isocitrate via cis-aconitate, a step in the citric acid cycle. Also catalyzes the reversible dehydration of (R)-homocitrate to cis-homoaconitate, a step in the alpha-aminoadipate pathway for lysine biosynthesis. This chain is Aconitate hydratase, mitochondrial (acoA), found in Emericella nidulans (strain FGSC A4 / ATCC 38163 / CBS 112.46 / NRRL 194 / M139) (Aspergillus nidulans).